Reading from the N-terminus, the 204-residue chain is Thymidylate kinase (204 aa).

11–18 lines the ATP pocket; sequence GLDKSGKT.

It belongs to the thymidylate kinase family.

It catalyses the reaction dTMP + ATP = dTDP + ADP. The protein operates within pyrimidine metabolism; dTTP biosynthesis. The chain is Thymidylate kinase (TMK) from Rabbitpox virus (strain Utrecht) (RPV).